Here is a 131-residue protein sequence, read N- to C-terminus: F(420)H(2) dehydrogenase subunit O (131 aa).

Positions 58, 63, and 66 each coordinate [2Fe-2S] cluster.

This sequence belongs to the FpoO family. In terms of assembly, the FPO complex is composed of at least 13 different subunits. It depends on [2Fe-2S] cluster as a cofactor.

The catalysed reaction is methanophenazine + reduced coenzyme F420-(gamma-L-Glu)(n) = dihydromethanophenazine + oxidized coenzyme F420-(gamma-L-Glu)(n) + H(+). Its function is as follows. Component of the F(420)H(2) dehydrogenase (FPO complex) which is part of the energy-conserving F(420)H(2):heterodisulfide oxidoreductase system. The membrane-bound electron transfer system of the complex plays an important role in the metabolism of methylotrophic methanogens when the organisms grow on methanol or methylamines. Catalyzes the oxidation of methanophenazine to dihydromethanophenazine. It shuttles electrons from F(420)H(2), via FAD and iron-sulfur (Fe-S) centers, to methanophenazine (an electron carrier in the membrane). It couples the redox reaction to proton translocation (for every two electrons transferred, two hydrogen ions are translocated across the cytoplasmic membrane), and thus conserves the redox energy in a proton gradient. It also catalyzes the oxidation of F(420)H(2) with quinones such as 2,3-dimethyl-1,4-naphthoquinone, 2-methyl-1,4-naphthoquinone and tetramethyl-p-benzoquinone. This chain is F(420)H(2) dehydrogenase subunit O (fpoO), found in Methanosarcina mazei (strain ATCC BAA-159 / DSM 3647 / Goe1 / Go1 / JCM 11833 / OCM 88) (Methanosarcina frisia).